Here is an 872-residue protein sequence, read N- to C-terminus: C-mannosyltransferase dpy-19 homolog (872 aa).

Transmembrane regions (helical) follow at residues 4–24, 126–146, 149–169, 179–199, 211–231, 257–277, 279–299, 326–346, and 399–419; these read PNLY…FLYV, FVWL…TLLS, IFGG…VAKI, FAFP…GRII, IFAM…STFI, VLDY…MSHG, SQLL…ITMV, FLML…ELFN, and VKTM…AMFF. The stretch at 508–535 forms a coiled coil; sequence KRLRAQINRNSVKQRKERAQETKEAATD. The tract at residues 514–620 is disordered; sequence INRNSVKQRK…RSSSRRSSVV (107 aa). Basic and acidic residues predominate over residues 524-533; it reads ERAQETKEAA. A compositionally biased stretch (acidic residues) spans 541–551; that stretch reads TEEEDKDPEAE. 2 helical membrane-spanning segments follow: residues 627–647 and 678–698; these read ILNM…LIGL and NIFW…PGMV.

This sequence belongs to the dpy-19 family.

It localises to the membrane. Functionally, probable C-mannosyltransferase that mediates C-mannosylation of tryptophan residues on target proteins. The sequence is that of C-mannosyltransferase dpy-19 homolog from Drosophila melanogaster (Fruit fly).